The following is a 571-amino-acid chain: Proline--tRNA ligase (571 aa).

The protein belongs to the class-II aminoacyl-tRNA synthetase family. ProS type 1 subfamily. In terms of assembly, homodimer.

It localises to the cytoplasm. It carries out the reaction tRNA(Pro) + L-proline + ATP = L-prolyl-tRNA(Pro) + AMP + diphosphate. Its function is as follows. Catalyzes the attachment of proline to tRNA(Pro) in a two-step reaction: proline is first activated by ATP to form Pro-AMP and then transferred to the acceptor end of tRNA(Pro). As ProRS can inadvertently accommodate and process non-cognate amino acids such as alanine and cysteine, to avoid such errors it has two additional distinct editing activities against alanine. One activity is designated as 'pretransfer' editing and involves the tRNA(Pro)-independent hydrolysis of activated Ala-AMP. The other activity is designated 'posttransfer' editing and involves deacylation of mischarged Ala-tRNA(Pro). The misacylated Cys-tRNA(Pro) is not edited by ProRS. This is Proline--tRNA ligase from Histophilus somni (strain 129Pt) (Haemophilus somnus).